The sequence spans 311 residues: tRNA-cytidine(32) 2-sulfurtransferase (311 aa).

The short motif at 47–52 (SGGKDS) is the PP-loop motif element. [4Fe-4S] cluster is bound by residues Cys122, Cys125, and Cys213.

It belongs to the TtcA family. In terms of assembly, homodimer. The cofactor is Mg(2+). It depends on [4Fe-4S] cluster as a cofactor.

It is found in the cytoplasm. It catalyses the reaction cytidine(32) in tRNA + S-sulfanyl-L-cysteinyl-[cysteine desulfurase] + AH2 + ATP = 2-thiocytidine(32) in tRNA + L-cysteinyl-[cysteine desulfurase] + A + AMP + diphosphate + H(+). It functions in the pathway tRNA modification. Catalyzes the ATP-dependent 2-thiolation of cytidine in position 32 of tRNA, to form 2-thiocytidine (s(2)C32). The sulfur atoms are provided by the cysteine/cysteine desulfurase (IscS) system. In Escherichia coli (strain 55989 / EAEC), this protein is tRNA-cytidine(32) 2-sulfurtransferase.